The following is a 32-amino-acid chain: uncharacterized protein (32 aa).

This is an uncharacterized protein from Haloarcula hispanica (His1V).